The following is a 250-amino-acid chain: Accessory gland-specific peptide 26Aa (250 aa).

Residues 1–18 form the signal peptide; that stretch reads MNQILLCSQILLLFFTVA. Positions 79-100 are disordered; that stretch reads DYPINNSKSRKNSSTLPSPILT. Residues 82-95 are compositionally biased toward polar residues; that stretch reads INNSKSRKNSSTLP. N-linked (GlcNAc...) asparagine glycans are attached at residues asparagine 83, asparagine 90, and asparagine 131. Disordered regions lie at residues 172–191 and 230–250; these read NVQNARKSTKSCKKRPSKDI and NNPATDVPTGKSPSEGNPSTT. The span at 178–187 shows a compositional bias: basic residues; sequence KSTKSCKKRP. Residues 240 to 250 show a composition bias toward polar residues; that stretch reads KSPSEGNPSTT.

Proteolytically cleaved as it is secreted and in the recipient female. As to expression, main cells of the accessory glands of males.

Its subcellular location is the secreted. It localises to the extracellular space. In terms of biological role, this protein is transferred from male to female's hemolymph during mating, affecting egglaying and behavior after mating. In Drosophila mauritiana (Fruit fly), this protein is Accessory gland-specific peptide 26Aa (Acp26Aa).